The following is a 215-amino-acid chain: MATERQYSPLDRLLLQADSAMRTLLPSSAHSQRPSPAVVQPEHKMSEADTRHVAGLMRINHTGEVCAQALYQGQALTAKLPKVRKAMERAAEEEIDHLVWCEQRIHQLGSHTSVLNPLFYSLSFGMGAVAGVISDRVSLGFVAATEDQVCKHLAEHLEQLPTEDGKSRAILQQMLSDEEHHAESALEAGGFRFPAPVKFGMSVLAKVMTKSTYRI.

The interval 26-47 is disordered; it reads PSSAHSQRPSPAVVQPEHKMSE. The Fe cation site is built by E64, E94, H97, E146, E178, and H181.

This sequence belongs to the COQ7 family. Fe cation is required as a cofactor.

The protein localises to the cell membrane. It carries out the reaction a 5-methoxy-2-methyl-3-(all-trans-polyprenyl)benzene-1,4-diol + AH2 + O2 = a 3-demethylubiquinol + A + H2O. It participates in cofactor biosynthesis; ubiquinone biosynthesis. Functionally, catalyzes the hydroxylation of 2-nonaprenyl-3-methyl-6-methoxy-1,4-benzoquinol during ubiquinone biosynthesis. The polypeptide is 3-demethoxyubiquinol 3-hydroxylase (Pseudomonas syringae pv. syringae (strain B728a)).